The following is a 117-amino-acid chain: Aspartate 1-decarboxylase (117 aa).

The active-site Schiff-base intermediate with substrate; via pyruvic acid is serine 25. At serine 25 the chain carries Pyruvic acid (Ser). Residue threonine 57 coordinates substrate. The active-site Proton donor is the tyrosine 58. A substrate-binding site is contributed by 72–74; sequence GAA.

It belongs to the PanD family. In terms of assembly, heterooctamer of four alpha and four beta subunits. Pyruvate is required as a cofactor. In terms of processing, is synthesized initially as an inactive proenzyme, which is activated by self-cleavage at a specific serine bond to produce a beta-subunit with a hydroxyl group at its C-terminus and an alpha-subunit with a pyruvoyl group at its N-terminus.

The protein localises to the cytoplasm. The catalysed reaction is L-aspartate + H(+) = beta-alanine + CO2. It functions in the pathway cofactor biosynthesis; (R)-pantothenate biosynthesis; beta-alanine from L-aspartate: step 1/1. Functionally, catalyzes the pyruvoyl-dependent decarboxylation of aspartate to produce beta-alanine. The protein is Aspartate 1-decarboxylase of Helicobacter pylori (strain J99 / ATCC 700824) (Campylobacter pylori J99).